The sequence spans 490 residues: Metalloreductase STEAP2 (490 aa).

NADP(+) contacts are provided by residues 38 to 41 (SGDF), 60 to 61 (SR), 93 to 100 (IHREHYTS), asparagine 118, and alanine 151. Tryptophan 152 and aspartate 160 together coordinate FAD. Residues 208-228 (LFTLWRGPVVVAISLATFFFL) form a helical membrane-spanning segment. Tyrosine 229 is a binding site for Fe(3+). The chain crosses the membrane as a helical span at residues 259-279 (LPIVAITLLSLVYLAGLLAAA). Residues 259 to 407 (LPIVAITLLS…LGYVALLIST (149 aa)) form the Ferric oxidoreductase domain. Residues glutamine 281 and arginine 302 each coordinate FAD. Helical transmembrane passes span 305 to 325 (LGLLSFFFAMVHVAYSLCLPM), 359 to 379 (MYISFGIMSLGLLSLLAVTSI), 393 to 413 (FIQSTLGYVALLISTFHVLIY), and 432 to 452 (FVLALVLPSIVILGKIILFLP). Histidine 316 contributes to the heme b binding site. Tyrosine 319 provides a ligand contact to Fe(3+). The FAD site is built by serine 378 and glutamine 395. Histidine 409 is a heme b binding site. At serine 483 the chain carries Phosphoserine.

This sequence belongs to the STEAP family. Requires FAD as cofactor. It depends on heme b as a cofactor. As to expression, expressed at high levels in prostate and at significantly lower levels in heart, brain, kidney, pancreas, and ovary.

It is found in the endosome membrane. Its subcellular location is the cell membrane. It catalyses the reaction 2 Fe(2+) + NADP(+) + H(+) = 2 Fe(3+) + NADPH. The catalysed reaction is 2 Cu(+) + NADP(+) + H(+) = 2 Cu(2+) + NADPH. In terms of biological role, integral membrane protein that functions as a NADPH-dependent ferric-chelate reductase, using NADPH from one side of the membrane to reduce a Fe(3+) chelate that is bound on the other side of the membrane. Mediates sequential transmembrane electron transfer from NADPH to FAD and onto heme, and finally to the Fe(3+) chelate. Can also reduce Cu(2+) to Cu(1+). This is Metalloreductase STEAP2 (STEAP2) from Homo sapiens (Human).